Reading from the N-terminus, the 87-residue chain is Putative outer membrane protein ArbH (87 aa).

Positions 1–23 (MKIKNSYLVIASLLYPISFISTA) are cleaved as a signal peptide.

The protein belongs to the porin LamB (TC 1.B.3) family.

It is found in the cell outer membrane. May be a sugar porin with a broad carbohydrate specificity. This is Putative outer membrane protein ArbH (arbH) from Dickeya chrysanthemi (Pectobacterium chrysanthemi).